An 84-amino-acid chain; its full sequence is MAHKKGASSTRNGRDSNAQRLGVKRFGGQVVNAGEILVRQRGTHFHPGSGVGRGKDDTLFALDAGAVEFGTHRGRKVVNIVPVA.

The segment at 1-22 (MAHKKGASSTRNGRDSNAQRLG) is disordered. Over residues 7-19 (ASSTRNGRDSNAQ) the composition is skewed to polar residues.

It belongs to the bacterial ribosomal protein bL27 family.

The chain is Large ribosomal subunit protein bL27 from Streptomyces avermitilis (strain ATCC 31267 / DSM 46492 / JCM 5070 / NBRC 14893 / NCIMB 12804 / NRRL 8165 / MA-4680).